Reading from the N-terminus, the 498-residue chain is Flagellin (498 aa).

It belongs to the bacterial flagellin family.

It is found in the secreted. Its subcellular location is the bacterial flagellum. Its function is as follows. Flagellin is the subunit protein which polymerizes to form the filaments of bacterial flagella. The polypeptide is Flagellin (fliC) (Escherichia coli (strain K12)).